Reading from the N-terminus, the 426-residue chain is Histidine--tRNA ligase (426 aa).

Belongs to the class-II aminoacyl-tRNA synthetase family. In terms of assembly, homodimer.

The protein resides in the cytoplasm. The enzyme catalyses tRNA(His) + L-histidine + ATP = L-histidyl-tRNA(His) + AMP + diphosphate + H(+). In Streptococcus pyogenes serotype M28 (strain MGAS6180), this protein is Histidine--tRNA ligase.